Consider the following 380-residue polypeptide: Cytochrome b (380 aa).

The next 4 membrane-spanning stretches (helical) occupy residues 34–54 (FGSLLGICLLTQIMTGLLLAT), 78–99 (WLIRNLHANGASFFFICIYLHI), 114–134 (WNTGIILLLTLMATAFVGYVL), and 179–199 (FFALHFLLPFLIAGLTLIHLT). Positions 84 and 98 each coordinate heme b. Positions 183 and 197 each coordinate heme b. An a ubiquinone-binding site is contributed by H202. The next 4 helical transmembrane spans lie at 227–247 (LKDILGFMLMLLPLTTLALFS), 289–309 (LGGVLALAASVLILFLIPFLH), 321–341 (ISQLLFWTLVANLLILTWIGS), and 348–368 (FIIIGQLASLTYFLILLALFP).

This sequence belongs to the cytochrome b family. As to quaternary structure, the cytochrome bc1 complex contains 11 subunits: 3 respiratory subunits (MT-CYB, CYC1 and UQCRFS1), 2 core proteins (UQCRC1 and UQCRC2) and 6 low-molecular weight proteins (UQCRH/QCR6, UQCRB/QCR7, UQCRQ/QCR8, UQCR10/QCR9, UQCR11/QCR10 and a cleavage product of UQCRFS1). This cytochrome bc1 complex then forms a dimer. It depends on heme b as a cofactor.

The protein localises to the mitochondrion inner membrane. Functionally, component of the ubiquinol-cytochrome c reductase complex (complex III or cytochrome b-c1 complex) that is part of the mitochondrial respiratory chain. The b-c1 complex mediates electron transfer from ubiquinol to cytochrome c. Contributes to the generation of a proton gradient across the mitochondrial membrane that is then used for ATP synthesis. In Buteo buteo (Eurasian buzzard), this protein is Cytochrome b (MT-CYB).